A 255-amino-acid chain; its full sequence is Phosphate import ATP-binding protein PstB (255 aa).

One can recognise an ABC transporter domain in the interval 9 to 250 (MYAQGLQFYY…PRNKQTEDYI (242 aa)). Position 41–48 (41–48 (GPSGCGKS)) interacts with ATP.

It belongs to the ABC transporter superfamily. Phosphate importer (TC 3.A.1.7) family. In terms of assembly, the complex is composed of two ATP-binding proteins (PstB), two transmembrane proteins (PstC and PstA) and a solute-binding protein (PstS).

It localises to the cell inner membrane. The catalysed reaction is phosphate(out) + ATP + H2O = ADP + 2 phosphate(in) + H(+). Part of the ABC transporter complex PstSACB involved in phosphate import. Responsible for energy coupling to the transport system. This chain is Phosphate import ATP-binding protein PstB, found in Nitratidesulfovibrio vulgaris (strain ATCC 29579 / DSM 644 / CCUG 34227 / NCIMB 8303 / VKM B-1760 / Hildenborough) (Desulfovibrio vulgaris).